We begin with the raw amino-acid sequence, 307 residues long: MEFVFLGTGAGVPSKGRNVSAIALQLLEERGQTWLFDCGEATQHQILHTSVRPRRIEKIFITHLHGDHIFGLPGLLGSRSFQGGTTPLTVYGPKGIKQFIEVALSVSTTHVKYPLEIVEITEEGTVFEDNEFHVETKRLSHGIECFGYRIIEKDIQGALLVDKLLEMGVKPGPLFKRLKDGEVVELENGTILNGKDFIGPPQKGRVITILGDTRYCEASRELAQDADVLVHEATFAAEDEQQAYDYFHSTSKQAASIALQANAKRLILTHISSRYQGDTYKELLKEARELFSNTEIATDLKSFPVDR.

Positions 63, 65, 67, 68, 141, 212, and 270 each coordinate Zn(2+). The active-site Proton acceptor is the aspartate 67.

The protein belongs to the RNase Z family. As to quaternary structure, homodimer. It depends on Zn(2+) as a cofactor.

The enzyme catalyses Endonucleolytic cleavage of RNA, removing extra 3' nucleotides from tRNA precursor, generating 3' termini of tRNAs. A 3'-hydroxy group is left at the tRNA terminus and a 5'-phosphoryl group is left at the trailer molecule.. Its function is as follows. Zinc phosphodiesterase, which displays some tRNA 3'-processing endonuclease activity. Probably involved in tRNA maturation, by removing a 3'-trailer from precursor tRNA. This Bacillus cereus (strain ZK / E33L) protein is Ribonuclease Z.